Consider the following 361-residue polypeptide: Serine/threonine-protein kinase SRK2B (361 aa).

Positions 4-260 constitute a Protein kinase domain; it reads YELVKDIGAG…IGDIKKHPWF (257 aa). ATP is bound by residues 10–18 and lysine 33; that span reads IGAGNFGVA. Residue aspartate 123 is the Proton acceptor of the active site. The residue at position 154 (serine 154) is a Phosphoserine. The interval 311–361 is disordered; it reads AFGWGGGEDAEGKEEDAEEEVEEVEEEEDEEDEYDKTVKQVHASMGEVRVS. Positions 318–344 are enriched in acidic residues; it reads EDAEGKEEDAEEEVEEVEEEEDEEDEY.

It belongs to the protein kinase superfamily. Ser/Thr protein kinase family. In terms of tissue distribution, expressed in seedlings.

It carries out the reaction L-seryl-[protein] + ATP = O-phospho-L-seryl-[protein] + ADP + H(+). It catalyses the reaction L-threonyl-[protein] + ATP = O-phospho-L-threonyl-[protein] + ADP + H(+). This is Serine/threonine-protein kinase SRK2B (SRK2B) from Arabidopsis thaliana (Mouse-ear cress).